Consider the following 553-residue polypeptide: CTP synthase (553 aa).

Residues 1–270 form an amidoligase domain region; it reads MTKYVFVTGG…DRLICEELRL (270 aa). Ser13 provides a ligand contact to CTP. Ser13 contributes to the UTP binding site. Residues 14 to 19 and Asp71 each bind ATP; that span reads SLGKGI. 2 residues coordinate Mg(2+): Asp71 and Glu144. Residues 151-153, 191-196, and Lys227 contribute to the CTP site; these read DIE and KTKPTQ. UTP-binding positions include 191-196 and Lys227; that span reads KTKPTQ. A Glutamine amidotransferase type-1 domain is found at 295 to 547; that stretch reads TIGMVGKYVD…VQAALACQQT (253 aa). Gly356 serves as a coordination point for L-glutamine. Cys383 functions as the Nucleophile; for glutamine hydrolysis in the catalytic mechanism. Residues 384 to 387, Glu407, and Arg473 contribute to the L-glutamine site; that span reads LGMQ. Active-site residues include His520 and Glu522.

This sequence belongs to the CTP synthase family. In terms of assembly, homotetramer.

The catalysed reaction is UTP + L-glutamine + ATP + H2O = CTP + L-glutamate + ADP + phosphate + 2 H(+). The enzyme catalyses L-glutamine + H2O = L-glutamate + NH4(+). It carries out the reaction UTP + NH4(+) + ATP = CTP + ADP + phosphate + 2 H(+). It participates in pyrimidine metabolism; CTP biosynthesis via de novo pathway; CTP from UDP: step 2/2. Its activity is regulated as follows. Allosterically activated by GTP, when glutamine is the substrate; GTP has no effect on the reaction when ammonia is the substrate. The allosteric effector GTP functions by stabilizing the protein conformation that binds the tetrahedral intermediate(s) formed during glutamine hydrolysis. Inhibited by the product CTP, via allosteric rather than competitive inhibition. Its function is as follows. Catalyzes the ATP-dependent amination of UTP to CTP with either L-glutamine or ammonia as the source of nitrogen. Regulates intracellular CTP levels through interactions with the four ribonucleotide triphosphates. The polypeptide is CTP synthase (Burkholderia mallei (strain NCTC 10247)).